The chain runs to 409 residues: L-cysteine:1D-myo-inositol 2-amino-2-deoxy-alpha-D-glucopyranoside ligase (409 aa).

Position 43 (Cys43) interacts with Zn(2+). Residues Cys43 to Thr46, Thr58, and Asn81 to Thr83 each bind L-cysteinyl-5'-AMP. Positions Ile45–His55 match the 'HIGH' region motif. Positions Glu183 to Pro188 match the 'ERGGDP' region motif. Trp224 contacts L-cysteinyl-5'-AMP. Position 228 (Cys228) interacts with Zn(2+). Gly246 to Asp248 serves as a coordination point for L-cysteinyl-5'-AMP. Position 253 (His253) interacts with Zn(2+). Residue Val280 coordinates L-cysteinyl-5'-AMP. The 'KMSKS' region motif lies at Lys286–Ser290.

Belongs to the class-I aminoacyl-tRNA synthetase family. MshC subfamily. Monomer. Zn(2+) serves as cofactor.

It carries out the reaction 1D-myo-inositol 2-amino-2-deoxy-alpha-D-glucopyranoside + L-cysteine + ATP = 1D-myo-inositol 2-(L-cysteinylamino)-2-deoxy-alpha-D-glucopyranoside + AMP + diphosphate + H(+). In terms of biological role, catalyzes the ATP-dependent condensation of GlcN-Ins and L-cysteine to form L-Cys-GlcN-Ins. This is L-cysteine:1D-myo-inositol 2-amino-2-deoxy-alpha-D-glucopyranoside ligase from Streptomyces griseus subsp. griseus (strain JCM 4626 / CBS 651.72 / NBRC 13350 / KCC S-0626 / ISP 5235).